The sequence spans 225 residues: MKGLNQFLNTDVEVVISGDTRFVGTLIDIGQDIFVIFDGCNYLYIPLLHLHQINKAKIVTSTEKPFLINPEDPMIEAETQAFSYRNTLNKVKGQFIEVYVTGGRSIHGYVTNVLNDYIVFFSPVFKILFISMHHLKWFTPYSTEQTPYTLDNSQLPVVPSKVPLVRNFEEQIKKNIGELVIFDMGEVPEKVGLLKGVSNNIIELINASGEPVIWKLNHLKTMHLP.

This is an uncharacterized protein from Bacillus subtilis (strain 168).